Consider the following 419-residue polypeptide: UDP-N-acetylglucosamine 1-carboxyvinyltransferase (419 aa).

22-23 lines the phosphoenolpyruvate pocket; it reads KN. Position 91 (R91) interacts with UDP-N-acetyl-alpha-D-glucosamine. C115 functions as the Proton donor in the catalytic mechanism. At C115 the chain carries 2-(S-cysteinyl)pyruvic acid O-phosphothioketal. UDP-N-acetyl-alpha-D-glucosamine-binding positions include 120-124, 160-163, D305, and V327; these read RPVDL and KVSV.

Belongs to the EPSP synthase family. MurA subfamily.

The protein resides in the cytoplasm. It catalyses the reaction phosphoenolpyruvate + UDP-N-acetyl-alpha-D-glucosamine = UDP-N-acetyl-3-O-(1-carboxyvinyl)-alpha-D-glucosamine + phosphate. Its pathway is cell wall biogenesis; peptidoglycan biosynthesis. In terms of biological role, cell wall formation. Adds enolpyruvyl to UDP-N-acetylglucosamine. The polypeptide is UDP-N-acetylglucosamine 1-carboxyvinyltransferase (Salmonella schwarzengrund (strain CVM19633)).